The sequence spans 98 residues: Omega-hexatoxin-Hr2b (98 aa).

Residues 1–22 form the signal peptide; the sequence is MKFSKLSLTLALILTQVLFVLC. A propeptide spanning residues 24–56 is cleaved from the precursor; the sequence is KINEDFMKHGLESQALHDEIRKPIDSENPDTER. 3 cysteine pairs are disulfide-bonded: Cys60/Cys74, Cys67/Cys80, and Cys73/Cys85. Position 97 is a leucine amide (Leu97).

This sequence belongs to the neurotoxin 15 family. 02 (omega-actx) subfamily. In terms of tissue distribution, expressed by the venom gland.

Its subcellular location is the secreted. Its function is as follows. Potent inhibitor of insect, but not mammalian, voltage-gated calcium channels (Cav). The polypeptide is Omega-hexatoxin-Hr2b (Atrax robustus (Sydney funnel-web spider)).